A 182-amino-acid chain; its full sequence is Early upstream open reading frame (182 aa).

This sequence belongs to the EUO family.

This is Early upstream open reading frame from Chlamydophila psittaci (strain ATCC VR-125 / 6BC) (Chlamydia psittaci).